The sequence spans 224 residues: Germin-like protein 8-8 (224 aa).

A signal peptide spans 1-22; sequence MASPSFCLLAALLALVSWQAIA. The cysteines at positions 32 and 47 are disulfide-linked. In terms of domain architecture, Cupin type-1 spans 62–212; that stretch reads AMLDTPRKTN…AFQVEKGTID (151 aa). A glycan (N-linked (GlcNAc...) asparagine) is linked at asparagine 76. Mn(2+) contacts are provided by histidine 109, histidine 111, and glutamate 116. A glycan (N-linked (GlcNAc...) asparagine) is linked at asparagine 135. Histidine 157 serves as a coordination point for Mn(2+).

This sequence belongs to the germin family. Oligomer (believed to be a pentamer but probably hexamer).

It is found in the secreted. Its subcellular location is the extracellular space. The protein localises to the apoplast. Its function is as follows. Plays a role in broad-spectrum disease resistance. Probably has no oxalate oxidase activity even if the active site is conserved. The sequence is that of Germin-like protein 8-8 from Oryza sativa subsp. japonica (Rice).